Reading from the N-terminus, the 176-residue chain is NAD(P)H-quinone oxidoreductase subunit 6, chloroplastic (176 aa).

The next 5 membrane-spanning stretches (helical) occupy residues 10 to 30, 32 to 52, 61 to 81, 92 to 112, and 152 to 172; these read FLLVFLGLGLILGGIGVVLLT, PIYSAFSLGLVLVCISLLYIL, AQLLIYVGAINVLIIFAVMFM, LWTVGNGFTLLICTSIFGLLI, and FFLPFEFISIILLAALIGAIT.

It belongs to the complex I subunit 6 family. In terms of assembly, NDH is composed of at least 16 different subunits, 5 of which are encoded in the nucleus.

It localises to the plastid. The protein localises to the chloroplast thylakoid membrane. The catalysed reaction is a plastoquinone + NADH + (n+1) H(+)(in) = a plastoquinol + NAD(+) + n H(+)(out). It catalyses the reaction a plastoquinone + NADPH + (n+1) H(+)(in) = a plastoquinol + NADP(+) + n H(+)(out). Functionally, NDH shuttles electrons from NAD(P)H:plastoquinone, via FMN and iron-sulfur (Fe-S) centers, to quinones in the photosynthetic chain and possibly in a chloroplast respiratory chain. The immediate electron acceptor for the enzyme in this species is believed to be plastoquinone. Couples the redox reaction to proton translocation, and thus conserves the redox energy in a proton gradient. This Morus indica (Mulberry) protein is NAD(P)H-quinone oxidoreductase subunit 6, chloroplastic (ndhG).